The primary structure comprises 182 residues: Vomeronasal secretory protein 1 (182 aa).

A signal peptide spans 1–18 (MRALLLIISFCLVAVLQA). N-linked (GlcNAc...) asparagine glycosylation is present at Asn-30. The cysteines at positions 76 and 168 are disulfide-linked.

This sequence belongs to the calycin superfamily. Lipocalin family. Specifically expressed in vomeronasal and posterior glands of the nasal septum, the ducts of which open into the lumen of the vomeronasal organ.

It localises to the secreted. In terms of biological role, transport of lipophilic molecules, possible pheromone-carrier. The sequence is that of Vomeronasal secretory protein 1 (Lcn3) from Mus musculus (Mouse).